We begin with the raw amino-acid sequence, 1028 residues long: Contactin-6 (1028 aa).

A signal peptide spans 1–19; it reads MRLLWKLVILLPLINSCAG. 6 consecutive Ig-like C2-type domains span residues 32–117, 122–208, 227–308, 318–402, 408–502, and 500–587; these read PQDV…AKLQ, EDFE…RSVQ, PKIE…RNLA, PEWE…AELR, PDFS…RTII, and TIIT…ERLS. 6 disulfides stabilise this stretch: C50-C100, C144-C196, C249-C297, C339-C386, C431-C479, and C521-C577. N-linked (GlcNAc...) asparagine glycans are attached at residues N65 and N193. 3 N-linked (GlcNAc...) asparagine glycosylation sites follow: N368, N377, and N468. Fibronectin type-III domains are found at residues 600–698, 703–800, 805–901, and 902–996; these read PPED…TKAS, APGN…SGED, APRG…TKKS, and PPSQ…KMSS. N659, N765, N860, and N865 each carry an N-linked (GlcNAc...) asparagine glycan. Residue Y882 is modified to Phosphotyrosine. N-linked (GlcNAc...) asparagine glycosylation is found at N895, N931, N956, and N957. A lipid anchor (GPI-anchor amidated serine) is attached at S999. Residues 1000–1028 constitute a propeptide, removed in mature form; the sequence is TGVQISKPSTQSLSMVGVFYCFAIHPLSR.

Belongs to the immunoglobulin superfamily. Contactin family. Interacts with PTPRG. Expressed in brain. In brain, it is preferentially expressed in the accessory olfactory bulb, layers II/III and V of the cerebral cortex, piriform cortex, anterior thalamic nuclei, locus coeruleus of the pons and mesencephalic trigeminal nucleus and in Purkinje cells of the cerebellum.

It localises to the cell membrane. In terms of biological role, contactins mediate cell surface interactions during nervous system development. Participates in oligodendrocytes generation by acting as a ligand of NOTCH1. Its association with NOTCH1 promotes NOTCH1 activation through the released notch intracellular domain (NICD) and subsequent translocation to the nucleus. Involved in motor coordination. In Mus musculus (Mouse), this protein is Contactin-6 (Cntn6).